The chain runs to 58 residues: Small ribosomal subunit protein bS21 (58 aa).

A disordered region spans residues 39–58; it reads DKPSVKKRAKSKAAAKYRSR. The segment covering 43–58 has biased composition (basic residues); the sequence is VKKRAKSKAAAKYRSR.

This sequence belongs to the bacterial ribosomal protein bS21 family.

In Chlamydia abortus (strain DSM 27085 / S26/3) (Chlamydophila abortus), this protein is Small ribosomal subunit protein bS21.